A 276-amino-acid chain; its full sequence is Glutamate 5-kinase (276 aa).

Lys-14 contributes to the ATP binding site. Substrate-binding residues include Ser-54, Asp-141, and Asn-157. Residues 177–178 (SD) and 219–225 (TGGMLTK) contribute to the ATP site.

Belongs to the glutamate 5-kinase family.

It is found in the cytoplasm. The enzyme catalyses L-glutamate + ATP = L-glutamyl 5-phosphate + ADP. It participates in amino-acid biosynthesis; L-proline biosynthesis; L-glutamate 5-semialdehyde from L-glutamate: step 1/2. Its function is as follows. Catalyzes the transfer of a phosphate group to glutamate to form L-glutamate 5-phosphate. The chain is Glutamate 5-kinase from Listeria innocua serovar 6a (strain ATCC BAA-680 / CLIP 11262).